An 82-amino-acid chain; its full sequence is Acyl carrier protein (82 aa).

The Carrier domain occupies 4 to 79; the sequence is PEMEARLKQI…DALNYIEQKL (76 aa). At Ser39 the chain carries O-(pantetheine 4'-phosphoryl)serine.

It belongs to the acyl carrier protein (ACP) family. Post-translationally, 4'-phosphopantetheine is transferred from CoA to a specific serine of apo-ACP by AcpS. This modification is essential for activity because fatty acids are bound in thioester linkage to the sulfhydryl of the prosthetic group.

It is found in the cytoplasm. It functions in the pathway lipid metabolism; fatty acid biosynthesis. In terms of biological role, carrier of the growing fatty acid chain in fatty acid biosynthesis. This is Acyl carrier protein from Roseiflexus castenholzii (strain DSM 13941 / HLO8).